A 559-amino-acid polypeptide reads, in one-letter code: Coiled-coil domain-containing protein 63 (559 aa).

Coiled coils occupy residues glutamate 14–threonine 70, glutamate 185–serine 261, and glutamine 364–leucine 414.

In terms of biological role, plays a role in spermiogenesis. Involved in the elongation of flagella and the formation of sperm heads. The protein is Coiled-coil domain-containing protein 63 of Rattus norvegicus (Rat).